The chain runs to 356 residues: Peptide-N(4)-(N-acetyl-beta-glucosaminyl)asparagine amidase (356 aa).

Cys-129, Cys-132, Cys-163, and Cys-166 together coordinate Zn(2+). Cys-189 acts as the Nucleophile in catalysis. Catalysis depends on residues His-216 and Asp-233. Position 236 (Glu-236) interacts with substrate. The disordered stretch occupies residues Ile-300 to Asp-356. Composition is skewed to basic and acidic residues over residues Ser-307–Asp-316 and Thr-346–Asp-356.

It belongs to the transglutaminase-like superfamily. PNGase family. Zn(2+) is required as a cofactor.

It localises to the cytoplasm. It catalyses the reaction Hydrolysis of an N(4)-(acetyl-beta-D-glucosaminyl)asparagine residue in which the glucosamine residue may be further glycosylated, to yield a (substituted) N-acetyl-beta-D-glucosaminylamine and a peptide containing an aspartate residue.. Specifically deglycosylates the denatured form of N-linked glycoproteins in the cytoplasm and assists their proteasome-mediated degradation. Cleaves the beta-aspartyl-glucosamine (GlcNAc) of the glycan and the amide side chain of Asn, converting Asn to Asp. Prefers proteins containing high-mannose over those bearing complex type oligosaccharides. Can recognize misfolded proteins in the endoplasmic reticulum that are exported to the cytosol to be destroyed and deglycosylate them, while it has no activity toward native proteins. Deglycosylation is a prerequisite for subsequent proteasome-mediated degradation of some, but not all, misfolded glycoproteins. In Yarrowia lipolytica (strain CLIB 122 / E 150) (Yeast), this protein is Peptide-N(4)-(N-acetyl-beta-glucosaminyl)asparagine amidase (PNG1).